The chain runs to 396 residues: Phosphoglycerate kinase (396 aa).

Residues 21 to 23, arginine 36, 59 to 62, arginine 118, and arginine 151 each bind substrate; these read DLN and HFDR. ATP is bound by residues lysine 201, glutamate 323, and 353–356; that span reads GGDT.

The protein belongs to the phosphoglycerate kinase family. As to quaternary structure, monomer.

The protein resides in the cytoplasm. The catalysed reaction is (2R)-3-phosphoglycerate + ATP = (2R)-3-phospho-glyceroyl phosphate + ADP. The protein operates within carbohydrate degradation; glycolysis; pyruvate from D-glyceraldehyde 3-phosphate: step 2/5. The polypeptide is Phosphoglycerate kinase (Granulibacter bethesdensis (strain ATCC BAA-1260 / CGDNIH1)).